The sequence spans 495 residues: N-succinylglutamate 5-semialdehyde dehydrogenase (495 aa).

228–233 (GSYATG) lines the NAD(+) pocket. Active-site residues include Glu251 and Cys285.

Belongs to the aldehyde dehydrogenase family. AstD subfamily.

The catalysed reaction is N-succinyl-L-glutamate 5-semialdehyde + NAD(+) + H2O = N-succinyl-L-glutamate + NADH + 2 H(+). The protein operates within amino-acid degradation; L-arginine degradation via AST pathway; L-glutamate and succinate from L-arginine: step 4/5. In terms of biological role, catalyzes the NAD-dependent reduction of succinylglutamate semialdehyde into succinylglutamate. The polypeptide is N-succinylglutamate 5-semialdehyde dehydrogenase (Legionella pneumophila (strain Corby)).